A 137-amino-acid polypeptide reads, in one-letter code: Small ribosomal subunit protein uS12 (137 aa).

Asp89 carries the 3-methylthioaspartic acid modification. A disordered region spans residues 104–137 (TAGVNGRKQSRSKYGAKRPKPGQAAAAPAKGKKK). Basic residues predominate over residues 111-123 (KQSRSKYGAKRPK). The segment covering 124 to 137 (PGQAAAAPAKGKKK) has biased composition (low complexity).

Belongs to the universal ribosomal protein uS12 family. In terms of assembly, part of the 30S ribosomal subunit. Contacts proteins S8 and S17. May interact with IF1 in the 30S initiation complex.

With S4 and S5 plays an important role in translational accuracy. In terms of biological role, interacts with and stabilizes bases of the 16S rRNA that are involved in tRNA selection in the A site and with the mRNA backbone. Located at the interface of the 30S and 50S subunits, it traverses the body of the 30S subunit contacting proteins on the other side and probably holding the rRNA structure together. The combined cluster of proteins S8, S12 and S17 appears to hold together the shoulder and platform of the 30S subunit. In Cytophaga hutchinsonii (strain ATCC 33406 / DSM 1761 / CIP 103989 / NBRC 15051 / NCIMB 9469 / D465), this protein is Small ribosomal subunit protein uS12.